The following is a 59-amino-acid chain: Large ribosomal subunit protein bL32 (59 aa).

Belongs to the bacterial ribosomal protein bL32 family. As to quaternary structure, part of the 50S ribosomal subunit.

The chain is Large ribosomal subunit protein bL32 (rpmF) from Bacillus subtilis (strain 168).